The chain runs to 86 residues: Toxin Tpa4 (86 aa).

The N-terminal stretch at 1–19 (MNYFVLIAVACLLTAGTES) is a signal peptide. The region spanning 21–82 (KDGYPLEYDN…EPIKTSGRCR (62 aa)) is the LCN-type CS-alpha/beta domain. Intrachain disulfides connect C31–C81, C35–C57, C43–C64, and C47–C66. P83 carries the proline amide modification.

The protein belongs to the long (4 C-C) scorpion toxin superfamily. Sodium channel inhibitor family. Alpha subfamily. Expressed by the venom gland.

The protein resides in the secreted. In terms of biological role, alpha toxins bind voltage-independently at site-3 of sodium channels (Nav) and inhibit the inactivation of the activated channels, thereby blocking neuronal transmission. This is Toxin Tpa4 from Tityus pachyurus (Colombian scorpion).